The sequence spans 445 residues: GTPase Der (445 aa).

EngA-type G domains follow at residues 3–167 (PVIA…YAGQ) and 180–353 (IKIA…AAAM). GTP contacts are provided by residues 9–16 (GRPNVGKS), 56–60 (DTGGF), 119–122 (NKAE), 186–193 (GRPNVGKS), 233–237 (DTAGL), and 298–301 (NKWD). One can recognise a KH-like domain in the interval 354 to 438 (SKLPTPKLTR…PLRIEFRSSN (85 aa)).

The protein belongs to the TRAFAC class TrmE-Era-EngA-EngB-Septin-like GTPase superfamily. EngA (Der) GTPase family. In terms of assembly, associates with the 50S ribosomal subunit.

Functionally, GTPase that plays an essential role in the late steps of ribosome biogenesis. This chain is GTPase Der, found in Burkholderia cenocepacia (strain ATCC BAA-245 / DSM 16553 / LMG 16656 / NCTC 13227 / J2315 / CF5610) (Burkholderia cepacia (strain J2315)).